Reading from the N-terminus, the 206-residue chain is Acidic proline-rich protein PRP33 (206 aa).

The signal sequence occupies residues 1–13 (MLVVLLTAALLVL). The segment at 15-206 (SAHGSDEEVI…EQPSYLWFSS (192 aa)) is disordered. A compositionally biased stretch (acidic residues) spans 55–71 (ENGDGDDSDDGDDDGSG). Tandem repeats lie at residues 80-97 (PPPHGGNHQRPPPGHHHG), 98-115 (PPPSGGPQTSSQPGNPQG), 116-133 (PPPQGGPQGPPQPGNPQG), 134-152 (PPPQGGPQQRPPQPGKPQG), 153-170 (PPPQGGPQGPPQPGNPQG), and 171-189 (PPPQGGHQQRPPQPRKPQD). The segment at 80-189 (PPPHGGNHQR…RPPQPRKPQD (110 aa)) is 6 X 18 AA approximate tandem repeats. Residues 103 to 112 (GPQTSSQPGN) are compositionally biased toward low complexity. Over residues 113 to 174 (PQGPPPQGGP…PGNPQGPPPQ (62 aa)) the composition is skewed to pro residues.

It localises to the secreted. In terms of biological role, may protect teeth by binding to tannins. The protein is Acidic proline-rich protein PRP33 (Prpg1) of Rattus norvegicus (Rat).